Reading from the N-terminus, the 563-residue chain is Sulfite reductase [NADPH] hemoprotein beta-component (563 aa).

The [4Fe-4S] cluster site is built by C426, C432, C472, and C476. A siroheme-binding site is contributed by C476.

Belongs to the nitrite and sulfite reductase 4Fe-4S domain family. As to quaternary structure, alpha(8)-beta(8). The alpha component is a flavoprotein, the beta component is a hemoprotein. Siroheme is required as a cofactor. The cofactor is [4Fe-4S] cluster.

It catalyses the reaction hydrogen sulfide + 3 NADP(+) + 3 H2O = sulfite + 3 NADPH + 4 H(+). It participates in sulfur metabolism; hydrogen sulfide biosynthesis; hydrogen sulfide from sulfite (NADPH route): step 1/1. Functionally, component of the sulfite reductase complex that catalyzes the 6-electron reduction of sulfite to sulfide. This is one of several activities required for the biosynthesis of L-cysteine from sulfate. The chain is Sulfite reductase [NADPH] hemoprotein beta-component from Photobacterium profundum (strain SS9).